The sequence spans 387 residues: 1-deoxy-D-xylulose 5-phosphate reductoisomerase (387 aa).

Positions 10, 11, 12, 13, 36, 37, 38, and 123 each coordinate NADPH. Lys124 serves as a coordination point for 1-deoxy-D-xylulose 5-phosphate. Glu125 provides a ligand contact to NADPH. A Mn(2+)-binding site is contributed by Asp149. Residues Ser150, Glu151, Ser175, and His198 each contribute to the 1-deoxy-D-xylulose 5-phosphate site. Glu151 contacts Mn(2+). Gly204 provides a ligand contact to NADPH. Residues Ser211, Asn216, Lys217, and Glu220 each contribute to the 1-deoxy-D-xylulose 5-phosphate site. Glu220 is a binding site for Mn(2+).

The protein belongs to the DXR family. Requires Mg(2+) as cofactor. Mn(2+) serves as cofactor.

It catalyses the reaction 2-C-methyl-D-erythritol 4-phosphate + NADP(+) = 1-deoxy-D-xylulose 5-phosphate + NADPH + H(+). It participates in isoprenoid biosynthesis; isopentenyl diphosphate biosynthesis via DXP pathway; isopentenyl diphosphate from 1-deoxy-D-xylulose 5-phosphate: step 1/6. Functionally, catalyzes the NADPH-dependent rearrangement and reduction of 1-deoxy-D-xylulose-5-phosphate (DXP) to 2-C-methyl-D-erythritol 4-phosphate (MEP). This is 1-deoxy-D-xylulose 5-phosphate reductoisomerase from Pelotomaculum thermopropionicum (strain DSM 13744 / JCM 10971 / SI).